A 73-amino-acid chain; its full sequence is Large ribosomal subunit protein bL31 (73 aa).

The Zn(2+) site is built by C16, C18, C36, and C39.

Belongs to the bacterial ribosomal protein bL31 family. Type A subfamily. Part of the 50S ribosomal subunit. Requires Zn(2+) as cofactor.

In terms of biological role, binds the 23S rRNA. The polypeptide is Large ribosomal subunit protein bL31 (Desulfosudis oleivorans (strain DSM 6200 / JCM 39069 / Hxd3) (Desulfococcus oleovorans)).